The chain runs to 488 residues: DNA polymerase processivity factor (488 aa).

Disordered regions lie at residues 1-26, 331-453, and 469-488; these read MTDS…GQPE, SPSA…RSGS, and PGAF…FGFP. Low complexity predominate over residues 331–344; that stretch reads SPSAGSSASRASGS. The segment covering 345 to 355 has biased composition (polar residues); the sequence is EPTDSQDSASD. Positions 368–379 are enriched in low complexity; that stretch reads AARAGEAGALHA. Positions 383-393 are enriched in polar residues; sequence PSSTTRVTPTT. The Bipartite nuclear localization signal signature appears at 394–413; sequence KRGRSGGEDARADTALKKPK. Over residues 398–409 the composition is skewed to basic and acidic residues; it reads SGGEDARADTAL. Residues 437–453 are compositionally biased toward low complexity; that stretch reads ADGTAARPAAPDARSGS.

Belongs to the herpesviridae DNA polymerase processivity factor family. As to quaternary structure, interacts with the DNA polymerase catalytic subunit UL30. Interacts with the origin-binding protein.

Its subcellular location is the host nucleus. Its function is as follows. Plays an essential role in viral DNA replication by acting as the polymerase accessory subunit. Associates with the viral polymerase to increase its processivity and forms high-affinity direct interactions with DNA. Facilitates the origin-binding protein UL9 loading onto DNA thus increasing its ability to assemble into a functional complex capable of unwinding duplex DNA. The sequence is that of DNA polymerase processivity factor from Homo sapiens (Human).